The sequence spans 145 residues: Large ribosomal subunit protein uL11 (145 aa).

The protein belongs to the universal ribosomal protein uL11 family. As to quaternary structure, part of the ribosomal stalk of the 50S ribosomal subunit. Interacts with L10 and the large rRNA to form the base of the stalk. L10 forms an elongated spine to which L12 dimers bind in a sequential fashion forming a multimeric L10(L12)X complex. Post-translationally, one or more lysine residues are methylated.

In terms of biological role, forms part of the ribosomal stalk which helps the ribosome interact with GTP-bound translation factors. This is Large ribosomal subunit protein uL11 from Persephonella marina (strain DSM 14350 / EX-H1).